The primary structure comprises 496 residues: Probable zinc metalloprotease SNOG_06590 (496 aa).

The first 20 residues, 1 to 20 (MRSSMFFAVCAAAALQTALS), serve as a signal peptide directing secretion. An N-linked (GlcNAc...) asparagine glycan is attached at asparagine 138. Zn(2+) is bound by residues histidine 161, aspartate 181, and glutamate 226. The N-linked (GlcNAc...) asparagine glycan is linked to asparagine 241. Aspartate 253 contacts Zn(2+). 5 N-linked (GlcNAc...) asparagine glycosylation sites follow: asparagine 282, asparagine 361, asparagine 409, asparagine 415, and asparagine 457. Positions 402–496 (EPMNVGINTT…PFPFGCTRNC (95 aa)) constitute a Fibronectin type-III domain.

The protein belongs to the peptidase M28 family. M28B subfamily. The cofactor is Zn(2+).

The protein localises to the secreted. The protein is Probable zinc metalloprotease SNOG_06590 of Phaeosphaeria nodorum (strain SN15 / ATCC MYA-4574 / FGSC 10173) (Glume blotch fungus).